We begin with the raw amino-acid sequence, 275 residues long: NH(3)-dependent NAD(+) synthetase (275 aa).

50-57 (GISGGVDS) is a binding site for ATP. Residue Asp56 participates in Mg(2+) binding. Arg147 provides a ligand contact to deamido-NAD(+). An ATP-binding site is contributed by Thr167. Glu172 contributes to the Mg(2+) binding site. The deamido-NAD(+) site is built by Lys180 and Asp187. Positions 196 and 218 each coordinate ATP. Position 267 to 268 (267 to 268 (HK)) interacts with deamido-NAD(+).

Belongs to the NAD synthetase family. In terms of assembly, homodimer.

It catalyses the reaction deamido-NAD(+) + NH4(+) + ATP = AMP + diphosphate + NAD(+) + H(+). Its pathway is cofactor biosynthesis; NAD(+) biosynthesis; NAD(+) from deamido-NAD(+) (ammonia route): step 1/1. Functionally, catalyzes the ATP-dependent amidation of deamido-NAD to form NAD. Uses ammonia as a nitrogen source. The polypeptide is NH(3)-dependent NAD(+) synthetase (Pseudomonas putida (strain ATCC 700007 / DSM 6899 / JCM 31910 / BCRC 17059 / LMG 24140 / F1)).